Reading from the N-terminus, the 287-residue chain is Kit ligand (287 aa).

The N-terminal stretch at 1 to 25 (MKKAQTWIITCFCLQLLLLNPLVKT) is a signal peptide. At 26-225 (QSSCGNPVTD…LGFISSSSLQ (200 aa)) the chain is on the extracellular side. Disulfide bonds link C29/C117 and C68/C167. N100, N106, N149, N178, N200, and N206 each carry an N-linked (GlcNAc...) asparagine glycan. The chain crosses the membrane as a helical span at residues 226-246 (GISIALTSLLSLLIGFILGVI). The Cytoplasmic portion of the chain corresponds to 247–287 (YWKKTHPKSRPESNETTQCHGCQEENEISMLQQKEKEHLQV).

It belongs to the SCF family. As to quaternary structure, homodimer, non-covalently linked. In terms of processing, a soluble form is produced by proteolytic processing of isoform 1 in the extracellular domain.

It is found in the cell membrane. The protein resides in the secreted. It localises to the cytoplasm. Its subcellular location is the cytoskeleton. The protein localises to the cell projection. It is found in the lamellipodium. The protein resides in the filopodium. Its function is as follows. Ligand for the receptor-type protein-tyrosine kinase KIT. Plays an essential role in the regulation of cell survival and proliferation, hematopoiesis, stem cell maintenance, gametogenesis, mast cell development, migration and function, and in melanogenesis. KITLG/SCF binding can activate several signaling pathways. Acts synergistically with other cytokines, probably interleukins. The sequence is that of Kit ligand (KITLG) from Coturnix japonica (Japanese quail).